The sequence spans 914 residues: Isoleucine--tRNA ligase (914 aa).

The 'HIGH' region motif lies at 64–74 (PYANGNFHLGH). E557 is a binding site for L-isoleucyl-5'-AMP. A 'KMSKS' region motif is present at residues 598–602 (PMSKS). ATP is bound at residue K601. 4 residues coordinate Zn(2+): C889, C892, C906, and C909.

The protein belongs to the class-I aminoacyl-tRNA synthetase family. IleS type 1 subfamily. Monomer. It depends on Zn(2+) as a cofactor.

The protein localises to the cytoplasm. It catalyses the reaction tRNA(Ile) + L-isoleucine + ATP = L-isoleucyl-tRNA(Ile) + AMP + diphosphate. In terms of biological role, catalyzes the attachment of isoleucine to tRNA(Ile). As IleRS can inadvertently accommodate and process structurally similar amino acids such as valine, to avoid such errors it has two additional distinct tRNA(Ile)-dependent editing activities. One activity is designated as 'pretransfer' editing and involves the hydrolysis of activated Val-AMP. The other activity is designated 'posttransfer' editing and involves deacylation of mischarged Val-tRNA(Ile). The chain is Isoleucine--tRNA ligase from Leptospira interrogans serogroup Icterohaemorrhagiae serovar Lai (strain 56601).